A 952-amino-acid chain; its full sequence is UvrABC system protein A (952 aa).

ATP is bound at residue 38-45 (GLSGSGKS). The C4-type zinc finger occupies 259 to 286 (CDKCGFSISELEPRLFSFNSPLGSCSYC). ABC transporter domains lie at 316–595 (FKNI…SNSI) and 615–944 (GNGK…QYLS). 647 to 654 (GVSGSGKS) contributes to the ATP binding site. A C4-type zinc finger spans residues 746–772 (CDKCFGDGVIRIEMHFLPDVYVKCEVC).

Belongs to the ABC transporter superfamily. UvrA family. As to quaternary structure, forms a heterotetramer with UvrB during the search for lesions.

It localises to the cytoplasm. In terms of biological role, the UvrABC repair system catalyzes the recognition and processing of DNA lesions. UvrA is an ATPase and a DNA-binding protein. A damage recognition complex composed of 2 UvrA and 2 UvrB subunits scans DNA for abnormalities. When the presence of a lesion has been verified by UvrB, the UvrA molecules dissociate. The chain is UvrABC system protein A from Mycoplasma genitalium (strain ATCC 33530 / DSM 19775 / NCTC 10195 / G37) (Mycoplasmoides genitalium).